We begin with the raw amino-acid sequence, 215 residues long: Probable transaldolase (215 aa).

Catalysis depends on K83, which acts as the Schiff-base intermediate with substrate.

This sequence belongs to the transaldolase family. Type 3B subfamily.

The protein resides in the cytoplasm. The catalysed reaction is D-sedoheptulose 7-phosphate + D-glyceraldehyde 3-phosphate = D-erythrose 4-phosphate + beta-D-fructose 6-phosphate. The protein operates within carbohydrate degradation; pentose phosphate pathway; D-glyceraldehyde 3-phosphate and beta-D-fructose 6-phosphate from D-ribose 5-phosphate and D-xylulose 5-phosphate (non-oxidative stage): step 2/3. Functionally, transaldolase is important for the balance of metabolites in the pentose-phosphate pathway. The chain is Probable transaldolase from Bdellovibrio bacteriovorus (strain ATCC 15356 / DSM 50701 / NCIMB 9529 / HD100).